The following is a 499-amino-acid chain: Putative antiporter subunit mnhD2 (499 aa).

Transmembrane regions (helical) follow at residues 3 to 23 (SNLLVLPILLPLLCALVLVFT), 32 to 52 (ILYIGTMSVNTVISLCLLIYV), 78 to 98 (LSLVMVTVASFVVTLIMSYGF), 108 to 128 (YYLPTFILFLTTGVIGSFLTS), 130 to 150 (LFNLYVMFEIMLLASFVLVTL), 161 to 181 (IIYVVLNIVGSWLFLLGIGLL), 206 to 226 (IIIISIVFIVAFGSKAALVLF), 240 to 260 (LAALFAALMTKVGAYALIRFF), 273 to 293 (PLLVFMSCITMLIGAFGVIAY), 308 to 328 (IGFVILGLGSNTFAGVHGAIF), 330 to 350 (LANDIIVKTMLFFIIGSLVYM), 368 to 388 (FFGVAFVVMIFAIGGVPPFSG), 403 to 423 (GNFIGLALMIITSLLAMYSLF), and 450 to 470 (TILGILVAVVLAMGIAAPVVM).

It belongs to the CPA3 antiporters (TC 2.A.63) subunit D family. May form a heterooligomeric complex that consists of seven subunits: mnhA2, mnhB2, mnhC2, mnhD2, mnhE2, mnhF2 and mnhG2.

Its subcellular location is the cell membrane. The protein is Putative antiporter subunit mnhD2 (mnhD2) of Staphylococcus haemolyticus (strain JCSC1435).